Here is a 525-residue protein sequence, read N- to C-terminus: uncharacterized protein (525 aa).

The signal sequence occupies residues 1-21; the sequence is MLECLSALLVLFAGGGGSVLA. The Extracellular segment spans residues 22 to 448; that stretch reads AVQSKTVADP…ISAASQLDER (427 aa). Residues 242 to 264 form a disordered region; it reads KVSSENCSKDTDDKSGSKKERNT. The chain crosses the membrane as a helical span at residues 449–469; sequence IFIFTAITVSITTLMMLGFSY. The Cytoplasmic portion of the chain corresponds to 470–525; sequence RSRVSFRDHSIDDSDDDNDWSDDEVEFDEEYFYSLPVSIPEKGISLDKMAQQLGVE.

The protein resides in the membrane. This is an uncharacterized protein from Saccharomyces cerevisiae (strain RM11-1a) (Baker's yeast).